The primary structure comprises 367 residues: Chorismate synthase (367 aa).

The disordered stretch occupies residues 41–60 (FTHDLQRRASGKSRHTSARR). NADP(+)-binding residues include arginine 48 and arginine 54. Residues 125–127 (RSS), 238–239 (NA), glycine 278, 293–297 (KPTSS), and arginine 319 each bind FMN.

It belongs to the chorismate synthase family. Homotetramer. FMNH2 serves as cofactor.

The enzyme catalyses 5-O-(1-carboxyvinyl)-3-phosphoshikimate = chorismate + phosphate. The protein operates within metabolic intermediate biosynthesis; chorismate biosynthesis; chorismate from D-erythrose 4-phosphate and phosphoenolpyruvate: step 7/7. Functionally, catalyzes the anti-1,4-elimination of the C-3 phosphate and the C-6 proR hydrogen from 5-enolpyruvylshikimate-3-phosphate (EPSP) to yield chorismate, which is the branch point compound that serves as the starting substrate for the three terminal pathways of aromatic amino acid biosynthesis. This reaction introduces a second double bond into the aromatic ring system. This chain is Chorismate synthase, found in Xanthomonas euvesicatoria pv. vesicatoria (strain 85-10) (Xanthomonas campestris pv. vesicatoria).